The primary structure comprises 82 residues: Sigma-G-dependent sporulation-specific SASP protein (82 aa).

The sequence is that of Sigma-G-dependent sporulation-specific SASP protein from Bacillus subtilis (strain 168).